The sequence spans 984 residues: MORC family CW-type zinc finger protein 1 (984 aa).

Residues alanine 284–serine 353 adopt a coiled-coil conformation. The segment at alanine 477–serine 531 adopts a CW-type zinc-finger fold. Zn(2+)-binding residues include cysteine 486, cysteine 489, cysteine 512, and cysteine 523. 2 coiled-coil regions span residues aspartate 737 to valine 761 and glutamate 900 to glycine 934.

It is found in the nucleus. In terms of biological role, required for spermatogenesis. Essential for de novo DNA methylation and silencing of transposable elements in the male embryonic germ cells. This Homo sapiens (Human) protein is MORC family CW-type zinc finger protein 1.